The sequence spans 444 residues: Phosphoglucosamine mutase (444 aa).

The Phosphoserine intermediate role is filled by serine 102. Mg(2+) is bound by residues serine 102, aspartate 239, aspartate 241, and aspartate 243. Serine 102 is modified (phosphoserine).

It belongs to the phosphohexose mutase family. Mg(2+) serves as cofactor. Activated by phosphorylation.

The enzyme catalyses alpha-D-glucosamine 1-phosphate = D-glucosamine 6-phosphate. Functionally, catalyzes the conversion of glucosamine-6-phosphate to glucosamine-1-phosphate. The sequence is that of Phosphoglucosamine mutase from Mycolicibacterium paratuberculosis (strain ATCC BAA-968 / K-10) (Mycobacterium paratuberculosis).